Consider the following 1119-residue polypeptide: Nuclear matrix constituent protein 1 (1119 aa).

Coiled-coil stretches lie at residues 140–226 (LAEL…LYQQ) and 328–488 (LQNR…LDER). Disordered regions lie at residues 846 to 884 (LDVE…AEEA), 903 to 974 (LASA…PTGR), 989 to 1015 (NGAL…EIPD), and 1046 to 1109 (GINA…EVSM). 2 stretches are compositionally biased toward basic residues: residues 859 to 876 (GNRK…RKRS) and 920 to 929 (KRTRNSRKRN). The span at 1075–1085 (TPEQSRGYQNQ) shows a compositional bias: polar residues.

This sequence belongs to the CRWN family.

It localises to the nucleus matrix. Its subcellular location is the nucleus lamina. Architectural component of nuclear structure that plays different roles in controlling nuclear size and morphology. The protein is Nuclear matrix constituent protein 1 of Daucus carota subsp. sativus (Carrot).